The sequence spans 781 residues: ATP-dependent 6-phosphofructokinase (781 aa).

Residues 1 to 394 form an N-terminal catalytic PFK domain 1 region; it reads MATWMEGKYV…NLATYIKLSK (394 aa). Residues G27, 90–91, and 120–123 each bind ATP; these read RC and GDGS. D121 contributes to the Mg(2+) binding site. Substrate-binding positions include 166 to 168, R203, 210 to 212, E266, R294, and 300 to 303; these read SID, MGR, and HVQR. The active-site Proton acceptor is D168. The interval 395 to 409 is interdomain linker; it reads IEQPRQSVMSSENNL. The segment at 410–781 is C-terminal regulatory PFK domain 2; the sequence is RIGIVNVGAP…ESIMAGTDRK (372 aa). Residues R479, 537-541, R575, 582-584, D638, R664, 670-673, and R745 each bind beta-D-fructose 2,6-bisphosphate; these read TISNN, MGG, and HMQQ.

It belongs to the phosphofructokinase type A (PFKA) family. ATP-dependent PFK group I subfamily. Eukaryotic two domain clade 'E' sub-subfamily. In terms of assembly, homotetramer. The cofactor is Mg(2+).

The protein resides in the cytoplasm. The enzyme catalyses beta-D-fructose 6-phosphate + ATP = beta-D-fructose 1,6-bisphosphate + ADP + H(+). The protein operates within carbohydrate degradation; glycolysis; D-glyceraldehyde 3-phosphate and glycerone phosphate from D-glucose: step 3/4. Allosterically activated by ADP, AMP, or fructose 2,6-bisphosphate, and allosterically inhibited by ATP or citrate. In terms of biological role, catalyzes the phosphorylation of D-fructose 6-phosphate to fructose 1,6-bisphosphate by ATP, the first committing step of glycolysis. This chain is ATP-dependent 6-phosphofructokinase (PFK), found in Schistosoma mansoni (Blood fluke).